The following is a 332-amino-acid chain: DNA double-strand break repair nuclease NurA (332 aa).

Residues Asp-57 and Asp-132 each contribute to the Mn(2+) site.

The protein belongs to the NurA family. Mn(2+) is required as a cofactor.

In terms of biological role, involved in DNA double-strand break (DSB) repair. Probably acts with HerA to stimulate resection of the 5' strand and produce the long 3' single-strand that is required for RadA loading. Exhibits both single-stranded endonuclease activity and 5'-3' exonuclease activity on single-stranded and double-stranded DNA. The protein is DNA double-strand break repair nuclease NurA of Sulfolobus acidocaldarius (strain ATCC 33909 / DSM 639 / JCM 8929 / NBRC 15157 / NCIMB 11770).